The sequence spans 157 residues: MRALYPGSFDPLTLGHLDLIERGCALFGEVVVAVLSNPAKTSTFTLQQRFNQIHVATAHCKGVSVICFEGLTVSCARHNQVDLILRGLRAMSDFEYELQIAHTNRSLAPDFETIFLATAAHHSFLSSSMVKEVARFGGNIDHMVPEVVAQDLHRLFN.

Serine 8 is a binding site for substrate. ATP-binding positions include 8-9 and histidine 16; that span reads SF. Substrate is bound by residues lysine 40, threonine 72, and arginine 86. ATP contacts are provided by residues 87 to 89, glutamate 97, and 122 to 128; these read GLR and HSFLSSS.

The protein belongs to the bacterial CoaD family. As to quaternary structure, homohexamer. Requires Mg(2+) as cofactor.

The protein resides in the cytoplasm. It catalyses the reaction (R)-4'-phosphopantetheine + ATP + H(+) = 3'-dephospho-CoA + diphosphate. The protein operates within cofactor biosynthesis; coenzyme A biosynthesis; CoA from (R)-pantothenate: step 4/5. In terms of biological role, reversibly transfers an adenylyl group from ATP to 4'-phosphopantetheine, yielding dephospho-CoA (dPCoA) and pyrophosphate. The protein is Phosphopantetheine adenylyltransferase of Prochlorococcus marinus (strain MIT 9313).